A 362-amino-acid polypeptide reads, in one-letter code: Chorismate synthase (362 aa).

Arginine 47 is an NADP(+) binding site. FMN-binding positions include 124–126, glycine 286, 301–305, and arginine 327; these read RSS and KPTAT.

This sequence belongs to the chorismate synthase family. Homotetramer. FMNH2 is required as a cofactor.

The catalysed reaction is 5-O-(1-carboxyvinyl)-3-phosphoshikimate = chorismate + phosphate. Its pathway is metabolic intermediate biosynthesis; chorismate biosynthesis; chorismate from D-erythrose 4-phosphate and phosphoenolpyruvate: step 7/7. Its function is as follows. Catalyzes the anti-1,4-elimination of the C-3 phosphate and the C-6 proR hydrogen from 5-enolpyruvylshikimate-3-phosphate (EPSP) to yield chorismate, which is the branch point compound that serves as the starting substrate for the three terminal pathways of aromatic amino acid biosynthesis. This reaction introduces a second double bond into the aromatic ring system. The polypeptide is Chorismate synthase (Synechococcus sp. (strain ATCC 27144 / PCC 6301 / SAUG 1402/1) (Anacystis nidulans)).